The chain runs to 785 residues: Proprotein convertase subtilisin/kexin type 7 (785 aa).

A signal peptide spans 1–37 (MPKGRQKVPHLDAPLGLPTCLWLELAGLFLLVPWVMG). A propeptide spanning residues 38–141 (LAGTGGPDGQ…EQRLLRRAKR (104 aa)) is cleaved from the precursor. Residues 142-667 (SVHFNDPKYP…YTITPNTLKT (526 aa)) are Extracellular-facing. The Peptidase S8 domain occupies 153–473 (QWHLNNRRSP…FGLLNAWRLV (321 aa)). Residues Asn-167 and Asn-175 are each glycosylated (N-linked (GlcNAc...) asparagine). Catalysis depends on Asp-187, which acts as the Charge relay system. A disordered region spans residues 197-219 (IAPNYSPEGSYDLNSNDPDPMPH). Catalysis depends on His-228, which acts as the Charge relay system. A glycan (N-linked (GlcNAc...) asparagine) is linked at Asn-241. The active-site Charge relay system is the Ser-406. The region spanning 481 to 618 (SVPYLASYVS…QLTLYGSVWS (138 aa)) is the P/Homo B domain. A glycan (N-linked (GlcNAc...) asparagine) is linked at Asn-511. A helical membrane pass occupies residues 668–688 (LVLVGCFTVFWTVYYMLEVYL). Topologically, residues 689-785 (SQRNVASNQV…VPHGKEEQIC (97 aa)) are cytoplasmic. Residues 700–751 (RSGPCHWPHRSRKAKEEGTELESVPLCSSKDPDEVETESRGPPTTSDLLAPD) form a disordered region.

The protein belongs to the peptidase S8 family. Ca(2+) serves as cofactor. In terms of processing, cysteine residues in the cytoplasmic tail are probably palmitoylated. N-glycosylated. Expressed in spleen, thymus, prostate, testis, ovary, small intestine, colon and peripheral blood leukocyte.

The protein localises to the golgi apparatus. It is found in the trans-Golgi network membrane. Its activity is regulated as follows. Inhibited by zinc and copper. Serine endoprotease that processes various proproteins by cleavage at paired basic amino acids, recognizing the RXXX[KR]R consensus motif. Likely functions in the constitutive secretory pathway. The sequence is that of Proprotein convertase subtilisin/kexin type 7 (PCSK7) from Homo sapiens (Human).